A 138-amino-acid chain; its full sequence is ATP synthase epsilon chain (138 aa).

Belongs to the ATPase epsilon chain family. F-type ATPases have 2 components, CF(1) - the catalytic core - and CF(0) - the membrane proton channel. CF(1) has five subunits: alpha(3), beta(3), gamma(1), delta(1), epsilon(1). CF(0) has three main subunits: a, b and c.

The protein localises to the cell membrane. Functionally, produces ATP from ADP in the presence of a proton gradient across the membrane. The protein is ATP synthase epsilon chain (atpC) of Buchnera aphidicola subsp. Acyrthosiphon pisum (strain APS) (Acyrthosiphon pisum symbiotic bacterium).